We begin with the raw amino-acid sequence, 209 residues long: Protease (209 aa).

Active-site residues include His-55, Asp-72, and Cys-123.

Belongs to the peptidase C5 family. As to quaternary structure, interacts with protease cofactor pVI-C; this interaction is necessary for protease activation.

It is found in the virion. Its subcellular location is the host nucleus. The enzyme catalyses Cleaves proteins of the adenovirus and its host cell at two consensus sites: -Yaa-Xaa-Gly-Gly-|-Xaa- and -Yaa-Xaa-Gly-Xaa-|-Gly- (in which Yaa is Met, Ile or Leu, and Xaa is any amino acid).. Its activity is regulated as follows. Requires DNA and protease cofactor for maximal activation. Inside nascent virions, becomes partially activated by binding to the viral DNA, allowing it to cleave the cofactor that binds to the protease and fully activates it. Actin, like the viral protease cofactor, seems to act as a cofactor in the cleavage of cytokeratin 18 and of actin itself. Cleaves viral precursor proteins (pTP, pIIIa, pVI, pVII, pVIII, and pX) inside newly assembled particles giving rise to mature virions. Protease complexed to its cofactor slides along the viral DNA to specifically locate and cleave the viral precursors. Mature virions have a weakened organization compared to the unmature virions, thereby facilitating subsequent uncoating. Without maturation, the particle lacks infectivity and is unable to uncoat. Late in adenovirus infection, in the cytoplasm, may participate in the cytoskeleton destruction. Cleaves host cell cytoskeletal keratins K7 and K18. This is Protease from Human adenovirus D serotype 17 (HAdV-17).